The chain runs to 3476 residues: Abnormal spindle-like microcephaly-associated protein homolog (3476 aa).

The tract at residues 1-30 (MANRRVGRGCWEVSPTERRPPAGLRGPAAE) is disordered. Serine 280, serine 283, serine 367, serine 392, and serine 425 each carry phosphoserine. 2 disordered regions span residues 416–443 (SNEN…ECQG) and 562–581 (APSS…GSME). Serine 604 bears the Phosphoserine mark. Residues 919-1055 (KASKEILLAF…LLWKIAFAFQ (137 aa)) enclose the Calponin-homology (CH) 1 domain. The stretch at 1056–1077 (VDISLNLDQLKEEIAFLKHTKS) forms a coiled coil. A Phosphoserine modification is found at serine 1102. The region spanning 1109–1260 (SENIKLLMDW…YLSFLCARLL (152 aa)) is the Calponin-homology (CH) 2 domain. 40 IQ domains span residues 1346-1377 (QNKA…IILQ), 1392-1421 (YLWA…MLKS), 1581-1612 (LKKT…VIIQ), 1604-1633 (MKKA…KTRS), 1631-1660 (TRSA…SVIK), 1654-1683 (ILTS…ATIK), 1727-1756 (MRES…AVIS), 1750-1781 (QRKA…IVIQ), 1800-1829 (VKKA…AALK), 1823-1852 (QSIA…SIIK), 1873-1902 (TKAA…AVLK), 1896-1927 (EHQA…LVIQ), 1946-1977 (LRHA…VIIQ), 1969-2000 (QHKC…LLIQ), 2019-2048 (TKAA…AAVT), 2042-2073 (CNKA…IIIQ), 2092-2123 (LKKT…TFIK), 2115-2146 (MHRA…IVIQ), 2165-2196 (ILKA…TLIQ), 2238-2269 (LRHS…TLIQ), 2261-2292 (MHIA…ILIQ), 2310-2341 (VQNA…TFIQ), 2333-2364 (MHRA…VVIQ), 2383-2414 (QRHS…TLIQ), 2406-2437 (MHSS…IFVQ), 2456-2487 (LRKA…ILIQ), 2479-2510 (MQRA…ILIQ), 2529-2560 (QWHS…IIIQ), 2623-2652 (QHQA…TVVS), 2664-2695 (RTQA…TLIQ), 2687-2718 (MHQA…VVIQ), 2737-2766 (VQKS…EKVA), 2858-2889 (QKRA…VVLQ), 2908-2937 (IRSS…STIK), 2931-2962 (IKNS…KIQA), 2953-2984 (KVKA…KIIQ), 3028-3059 (RHRA…LIIQ), 3078-3109 (FKKS…RLLH), 3180-3209 (RNRA…GIIK), and 3203-3234 (FTSG…IRLS).

It is found in the cytoplasm. It localises to the cytoskeleton. The protein resides in the spindle. Its subcellular location is the nucleus. Its function is as follows. Probable role in mitotic spindle regulation and coordination of mitotic processes. May have a preferential role in regulating neurogenesis. The chain is Abnormal spindle-like microcephaly-associated protein homolog (ASPM) from Gorilla gorilla gorilla (Western lowland gorilla).